The primary structure comprises 695 residues: Elongation factor G (695 aa).

Residues 12–286 (DKIRNIGIMA…AVIDYLPSPL (275 aa)) form the tr-type G domain. GTP is bound by residues 21–28 (AHIDAGKT), 85–89 (DTPGH), and 139–142 (NKMD).

This sequence belongs to the TRAFAC class translation factor GTPase superfamily. Classic translation factor GTPase family. EF-G/EF-2 subfamily.

Its subcellular location is the cytoplasm. In terms of biological role, catalyzes the GTP-dependent ribosomal translocation step during translation elongation. During this step, the ribosome changes from the pre-translocational (PRE) to the post-translocational (POST) state as the newly formed A-site-bound peptidyl-tRNA and P-site-bound deacylated tRNA move to the P and E sites, respectively. Catalyzes the coordinated movement of the two tRNA molecules, the mRNA and conformational changes in the ribosome. This chain is Elongation factor G, found in Thermotoga neapolitana (strain ATCC 49049 / DSM 4359 / NBRC 107923 / NS-E).